Here is a 447-residue protein sequence, read N- to C-terminus: Secretin receptor (447 aa).

Residues 1-28 (MLSTMSPRLSLLLLWLLLLINAAHPVGA) form the signal peptide. Topologically, residues 29 to 140 (LPRLCDVRRV…NERRHAYLLK (112 aa)) are extracellular. 3 disulfide bridges follow: cysteine 46–cysteine 74, cysteine 65–cysteine 106, and cysteine 88–cysteine 122. N-linked (GlcNAc...) asparagine glycans are attached at residues asparagine 71, asparagine 99, asparagine 105, and asparagine 127. The helical transmembrane segment at 141–166 (LKVMYTVGYSSSLAMLLVALSILCSF) threads the bilayer. The Cytoplasmic portion of the chain corresponds to 167–173 (RRLHCTR). A helical transmembrane segment spans residues 174–194 (NYIHMHLFVSFILRALSNFIK). Residues 195–215 (DAVLFPADDVTYCDAHRAGCK) are Extracellular-facing. Cysteine 214 and cysteine 284 are disulfide-bonded. Residues 216–238 (LVMIFFQYCIMANYAWLLVEGLY) form a helical membrane-spanning segment. Over 239–253 (LHTLLAISFFSERKC) the chain is Cytoplasmic. Residues 254 to 275 (LQAFVLFGWGSPAIFVALWAVT) traverse the membrane as a helical segment. Over 276–290 (RHFLEDFGCWDINSN) the chain is Extracellular. An N-linked (GlcNAc...) asparagine glycan is attached at asparagine 290. A helical transmembrane segment spans residues 291–314 (ASIWWVIRGPVILSIVINFIFFIN). Over 315–339 (ILRILMRKLRTQETRGNETHHYKRL) the chain is Cytoplasmic. The helical transmembrane segment at 340-355 (AKSTLLLIPLFGIHYI) threads the bilayer. Residues 356 to 366 (VFAFSPEGAME) lie on the Extracellular side of the membrane. The helical transmembrane segment at 367-390 (VQLFFELALGSFQGLVVAVLYCFL) threads the bilayer. The Cytoplasmic segment spans residues 391–447 (NGELEVQKKWRQWHLQEFPLRPVALSNSFSNATNGPTHSTKAGTSEQSRSIPGANVI). Residues 423-440 (TNGPTHSTKAGTSEQSRS) show a composition bias toward polar residues. The disordered stretch occupies residues 423-447 (TNGPTHSTKAGTSEQSRSIPGANVI).

This sequence belongs to the G-protein coupled receptor 2 family. In terms of processing, phosphorylated on Ser and Thr residues at the cytoplasmic C-terminus by G protein-coupled receptor kinases (GRKs). In terms of tissue distribution, in brain, expressed in the hippocampal CA1 region, the lower layer of cerebral cortex, the anterior olfactory nuclei, the anterior ventrolateral thalamus, the lateral region of hypothalamus, substantia nigra, tegmental area and central nucleus of the inferior colliculus, the ventral supramamillary nucleus and the cerebellum. Expressed in brown adipocytes: expression predominates in mature brown adipocytes (at protein level). Detected in the renal medulla, where it localized predominantly on the basolateral membranes of cells in the collecting ducts (blue arrow) and the ascending thick segments of the loop of Henle.

Its subcellular location is the cell membrane. The protein resides in the basolateral cell membrane. In terms of biological role, g protein-coupled receptor activated by secretin (SCT), which is involved in different processes such as regulation of the pH of the duodenal content, food intake and water homeostasis. Ligand binding causes a conformation change that triggers signaling via guanine nucleotide-binding proteins (G proteins) and activates cAMP-dependent pathway. Upon binding to secretin, regulates the pH of the duodenum by (1) inhibiting the secretion of gastric acid from the parietal cells of the stomach and (2) stimulating the production of bicarbonate (NaHCO(3)) from the ductal cells of the pancreas. In addition to regulating the pH of the duodenal content, plays a central role in diet induced thermogenesis: acts as a non-sympathetic brown fat (BAT) activator mediating prandial thermogenesis, which consequentially induces satiation. Mechanistically, secretin released by the gut after a meal binds to secretin receptor (SCTR) in brown adipocytes, activating brown fat thermogenesis by stimulating lipolysis, which is sensed in the brain and promotes satiation. Also able to stimulate lipolysis in white adipocytes. Also plays an important role in cellular osmoregulation by regulating renal water reabsorption. Also plays a role in the central nervous system: required for synaptic plasticity. The polypeptide is Secretin receptor (Mus musculus (Mouse)).